The sequence spans 374 residues: Putative L-lysine 2,3-aminomutase aq_1632 (374 aa).

A Radical SAM core domain is found at His86–Glu314. [4Fe-4S] cluster is bound by residues Cys100, Cys104, and Cys107. Lys317 is modified (N6-(pyridoxal phosphate)lysine).

This sequence belongs to the radical SAM superfamily. KamA family. [4Fe-4S] cluster serves as cofactor. Requires pyridoxal 5'-phosphate as cofactor.

This is Putative L-lysine 2,3-aminomutase aq_1632 from Aquifex aeolicus (strain VF5).